A 108-amino-acid polypeptide reads, in one-letter code: UPF0060 membrane protein RSKD131_0092 (108 aa).

4 consecutive transmembrane segments (helical) span residues L5–W25, A32–T52, A62–V82, and R86–P106.

The protein belongs to the UPF0060 family.

The protein localises to the cell inner membrane. The polypeptide is UPF0060 membrane protein RSKD131_0092 (Cereibacter sphaeroides (strain KD131 / KCTC 12085) (Rhodobacter sphaeroides)).